The sequence spans 171 residues: PRA1-like protein (171 aa).

A run of 3 helical transmembrane segments spans residues 67–87 (AIIA…LIVI), 119–139 (VILA…ETII), and 140–160 (WLVG…EPPV).

This sequence belongs to the PRA1 family.

It localises to the membrane. The protein is PRA1-like protein of Schizosaccharomyces pombe (strain 972 / ATCC 24843) (Fission yeast).